A 120-amino-acid polypeptide reads, in one-letter code: Adult-specific rigid cuticular protein 11.9 (120 aa).

The region spanning 9–87 (GGAYNFGYNT…ALAAMAPKAP (79 aa)) is the Chitin-binding type R&amp;R domain.

Functionally, component of the rigid cuticle of the spider. The protein is Adult-specific rigid cuticular protein 11.9 of Araneus diadematus (European garden spider).